The sequence spans 448 residues: tRNA-2-methylthio-N(6)-dimethylallyladenosine synthase (448 aa).

In terms of domain architecture, MTTase N-terminal spans 3–118 (KKVFIKTFGC…LPELLNARAA (116 aa)). 6 residues coordinate [4Fe-4S] cluster: cysteine 12, cysteine 49, cysteine 81, cysteine 155, cysteine 159, and cysteine 162. One can recognise a Radical SAM core domain in the interval 141 to 374 (RVEGASAFVS…QAVINRNILE (234 aa)). One can recognise a TRAM domain in the interval 377–440 (QERVGTVQRL…TYTLRGEVVM (64 aa)).

It belongs to the methylthiotransferase family. MiaB subfamily. In terms of assembly, monomer. It depends on [4Fe-4S] cluster as a cofactor.

The protein localises to the cytoplasm. The catalysed reaction is N(6)-dimethylallyladenosine(37) in tRNA + (sulfur carrier)-SH + AH2 + 2 S-adenosyl-L-methionine = 2-methylsulfanyl-N(6)-dimethylallyladenosine(37) in tRNA + (sulfur carrier)-H + 5'-deoxyadenosine + L-methionine + A + S-adenosyl-L-homocysteine + 2 H(+). Its function is as follows. Catalyzes the methylthiolation of N6-(dimethylallyl)adenosine (i(6)A), leading to the formation of 2-methylthio-N6-(dimethylallyl)adenosine (ms(2)i(6)A) at position 37 in tRNAs that read codons beginning with uridine. In Acidovorax sp. (strain JS42), this protein is tRNA-2-methylthio-N(6)-dimethylallyladenosine synthase.